Consider the following 184-residue polypeptide: GTP cyclohydrolase 1 (184 aa).

Residues cysteine 75, histidine 78, and cysteine 146 each contribute to the Zn(2+) site.

This sequence belongs to the GTP cyclohydrolase I family. Toroid-shaped homodecamer, composed of two pentamers of five dimers.

It catalyses the reaction GTP + H2O = 7,8-dihydroneopterin 3'-triphosphate + formate + H(+). It participates in cofactor biosynthesis; 7,8-dihydroneopterin triphosphate biosynthesis; 7,8-dihydroneopterin triphosphate from GTP: step 1/1. In Streptococcus sanguinis (strain SK36), this protein is GTP cyclohydrolase 1.